The primary structure comprises 100 residues: Aspartyl/glutamyl-tRNA(Asn/Gln) amidotransferase subunit C (100 aa).

This sequence belongs to the GatC family. Heterotrimer of A, B and C subunits.

The catalysed reaction is L-glutamyl-tRNA(Gln) + L-glutamine + ATP + H2O = L-glutaminyl-tRNA(Gln) + L-glutamate + ADP + phosphate + H(+). The enzyme catalyses L-aspartyl-tRNA(Asn) + L-glutamine + ATP + H2O = L-asparaginyl-tRNA(Asn) + L-glutamate + ADP + phosphate + 2 H(+). Allows the formation of correctly charged Asn-tRNA(Asn) or Gln-tRNA(Gln) through the transamidation of misacylated Asp-tRNA(Asn) or Glu-tRNA(Gln) in organisms which lack either or both of asparaginyl-tRNA or glutaminyl-tRNA synthetases. The reaction takes place in the presence of glutamine and ATP through an activated phospho-Asp-tRNA(Asn) or phospho-Glu-tRNA(Gln). The sequence is that of Aspartyl/glutamyl-tRNA(Asn/Gln) amidotransferase subunit C from Rickettsia africae (strain ESF-5).